A 320-amino-acid chain; its full sequence is Beta-carotene 4-ketolase 3 (320 aa).

The catalysed reaction is echinenone + 2 AH2 + 2 O2 = canthaxanthin + 2 A + 3 H2O. It catalyses the reaction all-trans-beta-carotene + 2 AH2 + 2 O2 = echinenone + 2 A + 3 H2O. Its pathway is carotenoid biosynthesis. Involved in the biosynthesis of ketocarotenoids which are powerful anti-oxidative molecules. Catalyzes the conversion of beta-carotene to canthaxanthin via echinenone. This Haematococcus lacustris (Green alga) protein is Beta-carotene 4-ketolase 3.